Reading from the N-terminus, the 483-residue chain is Siroheme synthase (483 aa).

The interval 1-203 is precorrin-2 dehydrogenase /sirohydrochlorin ferrochelatase; the sequence is MNYFPIFANL…RQNTLAEREL (203 aa). NAD(+) is bound by residues 22–23 and 43–44; these read AV and KH. The residue at position 128 (Ser128) is a Phosphoserine. The segment at 214–483 is uroporphyrinogen-III C-methyltransferase; sequence GFVSLVGAGP…LGTGQEQQAA (270 aa). Pro223 provides a ligand contact to S-adenosyl-L-methionine. Asp246 functions as the Proton acceptor in the catalytic mechanism. Lys268 serves as the catalytic Proton donor. Residues 299 to 301, Val304, 329 to 330, Met381, and Gly410 contribute to the S-adenosyl-L-methionine site; these read GGD and TA.

The protein in the N-terminal section; belongs to the precorrin-2 dehydrogenase / sirohydrochlorin ferrochelatase family. It in the C-terminal section; belongs to the precorrin methyltransferase family.

It carries out the reaction uroporphyrinogen III + 2 S-adenosyl-L-methionine = precorrin-2 + 2 S-adenosyl-L-homocysteine + H(+). The catalysed reaction is precorrin-2 + NAD(+) = sirohydrochlorin + NADH + 2 H(+). It catalyses the reaction siroheme + 2 H(+) = sirohydrochlorin + Fe(2+). It functions in the pathway cofactor biosynthesis; adenosylcobalamin biosynthesis; precorrin-2 from uroporphyrinogen III: step 1/1. It participates in cofactor biosynthesis; adenosylcobalamin biosynthesis; sirohydrochlorin from precorrin-2: step 1/1. Its pathway is porphyrin-containing compound metabolism; siroheme biosynthesis; precorrin-2 from uroporphyrinogen III: step 1/1. The protein operates within porphyrin-containing compound metabolism; siroheme biosynthesis; siroheme from sirohydrochlorin: step 1/1. It functions in the pathway porphyrin-containing compound metabolism; siroheme biosynthesis; sirohydrochlorin from precorrin-2: step 1/1. Functionally, multifunctional enzyme that catalyzes the SAM-dependent methylations of uroporphyrinogen III at position C-2 and C-7 to form precorrin-2 via precorrin-1. Then it catalyzes the NAD-dependent ring dehydrogenation of precorrin-2 to yield sirohydrochlorin. Finally, it catalyzes the ferrochelation of sirohydrochlorin to yield siroheme. The chain is Siroheme synthase from Neisseria meningitidis serogroup C / serotype 2a (strain ATCC 700532 / DSM 15464 / FAM18).